We begin with the raw amino-acid sequence, 433 residues long: Protein slt1 (433 aa).

Disordered regions lie at residues 159–184 (SPEESSESQAEVADQQTGPYSTSEYA), 200–234 (NAPEQQSGPDVAELNTLPNRSKTSSQASVSDEELS), and 252–433 (SNKR…DEDA). 2 stretches are compositionally biased toward polar residues: residues 172–184 (DQQTGPYSTSEYA) and 215–228 (TLPNRSKTSSQASV). 3 positions are modified to phosphoserine: Ser227, Ser229, and Ser269. Positions 343 to 353 (IDTKAGEKLTD) are enriched in basic and acidic residues. The segment covering 385–421 (EGSNNHEQGSFNEPKSNVDSNDSASPKRPSSQASLRH) has biased composition (polar residues). 3 positions are modified to phosphoserine: Ser409, Ser415, and Ser418.

This chain is Protein slt1 (slt1), found in Schizosaccharomyces pombe (strain 972 / ATCC 24843) (Fission yeast).